The following is a 401-amino-acid chain: Argininosuccinate synthase (401 aa).

Residues 10–18 (AYSGGVDTS) and A38 contribute to the ATP site. Position 89 (Y89) interacts with L-citrulline. Position 119 (G119) interacts with ATP. L-aspartate is bound by residues T121, N125, and D126. N125 contacts L-citrulline. L-citrulline contacts are provided by R129, S177, S186, E262, and Y274.

It belongs to the argininosuccinate synthase family. Type 1 subfamily. Homotetramer.

Its subcellular location is the cytoplasm. The enzyme catalyses L-citrulline + L-aspartate + ATP = 2-(N(omega)-L-arginino)succinate + AMP + diphosphate + H(+). Its pathway is amino-acid biosynthesis; L-arginine biosynthesis; L-arginine from L-ornithine and carbamoyl phosphate: step 2/3. The protein is Argininosuccinate synthase of Synechococcus sp. (strain WH7803).